Here is a 356-residue protein sequence, read N- to C-terminus: 5-formaminoimidazole-4-carboxamide-1-(beta)-D-ribofuranosyl 5'-monophosphate synthetase (356 aa).

5-amino-1-(5-phospho-beta-D-ribosyl)imidazole-4-carboxamide is bound by residues histidine 27 and serine 94. The ATP-grasp domain occupies 116 to 333 (RCLAWESDRE…YSDLIEKGLS (218 aa)). Residues 145-196 (AELI…TRYY) and glutamate 226 contribute to the ATP site. A 5-amino-1-(5-phospho-beta-D-ribosyl)imidazole-4-carboxamide-binding site is contributed by asparagine 255. Positions 293 and 306 each coordinate Mg(2+).

This sequence belongs to the phosphohexose mutase family. Requires Mg(2+) as cofactor. Mn(2+) is required as a cofactor.

The enzyme catalyses 5-amino-1-(5-phospho-beta-D-ribosyl)imidazole-4-carboxamide + formate + ATP = 5-formamido-1-(5-phospho-D-ribosyl)imidazole-4-carboxamide + ADP + phosphate. The protein operates within purine metabolism; IMP biosynthesis via de novo pathway; 5-formamido-1-(5-phospho-D-ribosyl)imidazole-4-carboxamide from 5-amino-1-(5-phospho-D-ribosyl)imidazole-4-carboxamide (formate route): step 1/1. Its function is as follows. Catalyzes the ATP- and formate-dependent formylation of 5-aminoimidazole-4-carboxamide-1-beta-d-ribofuranosyl 5'-monophosphate (AICAR) to 5-formaminoimidazole-4-carboxamide-1-beta-d-ribofuranosyl 5'-monophosphate (FAICAR) in the absence of folates. In Methanothrix thermoacetophila (strain DSM 6194 / JCM 14653 / NBRC 101360 / PT) (Methanosaeta thermophila), this protein is 5-formaminoimidazole-4-carboxamide-1-(beta)-D-ribofuranosyl 5'-monophosphate synthetase.